Here is a 175-residue protein sequence, read N- to C-terminus: Sec-independent protein translocase protein TatB (175 aa).

The chain crosses the membrane as a helical span at residues 1–21 (MLDLGLTKMALIGVVALVVLG). 2 disordered regions span residues 104–132 (GGALEDVGNAGNTSWPGSTPAAGAKRKNW) and 155–175 (SGAARVARHTPATMRRPTRFF).

This sequence belongs to the TatB family. As to quaternary structure, the Tat system comprises two distinct complexes: a TatABC complex, containing multiple copies of TatA, TatB and TatC subunits, and a separate TatA complex, containing only TatA subunits. Substrates initially bind to the TatABC complex, which probably triggers association of the separate TatA complex to form the active translocon.

It is found in the cell inner membrane. Functionally, part of the twin-arginine translocation (Tat) system that transports large folded proteins containing a characteristic twin-arginine motif in their signal peptide across membranes. Together with TatC, TatB is part of a receptor directly interacting with Tat signal peptides. TatB may form an oligomeric binding site that transiently accommodates folded Tat precursor proteins before their translocation. In Paraburkholderia xenovorans (strain LB400), this protein is Sec-independent protein translocase protein TatB.